A 344-amino-acid chain; its full sequence is L-rhamnose-proton symporter (344 aa).

The next 10 membrane-spanning stretches (helical) occupy residues A4–A24, W38–L58, F68–I88, M101–I121, T137–L157, L175–A195, L214–I234, I259–G279, M290–L310, and V321–G341.

The protein belongs to the L-rhamnose transporter (TC 2.A.7.6) family.

The protein localises to the cell inner membrane. It carries out the reaction L-rhamnopyranose(in) + H(+)(in) = L-rhamnopyranose(out) + H(+)(out). Functionally, uptake of L-rhamnose across the cytoplasmic membrane with the concomitant transport of protons into the cell (symport system). This Salmonella dublin (strain CT_02021853) protein is L-rhamnose-proton symporter.